We begin with the raw amino-acid sequence, 462 residues long: uncharacterized protein (462 aa).

Residues 22–90 (KPIYKALAGQ…VGSGTFVSYD (69 aa)) form the HTH gntR-type domain. The H-T-H motif DNA-binding region spans 50 to 69 (QRELADYLDLNVSTISKAFK). Lys-308 carries the N6-(pyridoxal phosphate)lysine modification.

It in the C-terminal section; belongs to the class-I pyridoxal-phosphate-dependent aminotransferase family. It depends on pyridoxal 5'-phosphate as a cofactor.

This is an uncharacterized protein from Bacillus subtilis (strain 168).